Here is a 181-residue protein sequence, read N- to C-terminus: Acireductone dioxygenase (181 aa).

Positions 97, 99, 103, and 141 each coordinate Fe(2+). The Ni(2+) site is built by His97, His99, Glu103, and His141.

This sequence belongs to the acireductone dioxygenase (ARD) family. Monomer. Requires Fe(2+) as cofactor. Ni(2+) serves as cofactor.

The enzyme catalyses 1,2-dihydroxy-5-(methylsulfanyl)pent-1-en-3-one + O2 = 3-(methylsulfanyl)propanoate + CO + formate + 2 H(+). It catalyses the reaction 1,2-dihydroxy-5-(methylsulfanyl)pent-1-en-3-one + O2 = 4-methylsulfanyl-2-oxobutanoate + formate + 2 H(+). Its pathway is amino-acid biosynthesis; L-methionine biosynthesis via salvage pathway; L-methionine from S-methyl-5-thio-alpha-D-ribose 1-phosphate: step 5/6. Functionally, catalyzes 2 different reactions between oxygen and the acireductone 1,2-dihydroxy-3-keto-5-methylthiopentene (DHK-MTPene) depending upon the metal bound in the active site. Fe-containing acireductone dioxygenase (Fe-ARD) produces formate and 2-keto-4-methylthiobutyrate (KMTB), the alpha-ketoacid precursor of methionine in the methionine recycle pathway. Ni-containing acireductone dioxygenase (Ni-ARD) produces methylthiopropionate, carbon monoxide and formate, and does not lie on the methionine recycle pathway. This chain is Acireductone dioxygenase, found in Pseudomonas syringae pv. syringae (strain B728a).